We begin with the raw amino-acid sequence, 340 residues long: Extracellular matrix protein-binding protein emp (340 aa).

Residues 1–26 form the signal peptide; sequence MKKKLLVLTMSTLFATQIMNSNHAKA.

Its subcellular location is the cell surface. Adhesin that binds to the host cell extracellular matrix proteins fibronectin, fibrinogen, collagen, and vitronectin. The chain is Extracellular matrix protein-binding protein emp (emp) from Staphylococcus aureus (strain MSSA476).